Here is a 240-residue protein sequence, read N- to C-terminus: Ribonuclease PH (240 aa).

Phosphate contacts are provided by residues Arg87 and 125–127; that span reads GTR.

It belongs to the RNase PH family. In terms of assembly, homohexameric ring arranged as a trimer of dimers.

The enzyme catalyses tRNA(n+1) + phosphate = tRNA(n) + a ribonucleoside 5'-diphosphate. Phosphorolytic 3'-5' exoribonuclease that plays an important role in tRNA 3'-end maturation. Removes nucleotide residues following the 3'-CCA terminus of tRNAs; can also add nucleotides to the ends of RNA molecules by using nucleoside diphosphates as substrates, but this may not be physiologically important. Probably plays a role in initiation of 16S rRNA degradation (leading to ribosome degradation) during starvation. In Stutzerimonas stutzeri (strain A1501) (Pseudomonas stutzeri), this protein is Ribonuclease PH.